The sequence spans 94 residues: Aspartyl/glutamyl-tRNA(Asn/Gln) amidotransferase subunit C (94 aa).

Belongs to the GatC family. In terms of assembly, heterotrimer of A, B and C subunits.

It catalyses the reaction L-glutamyl-tRNA(Gln) + L-glutamine + ATP + H2O = L-glutaminyl-tRNA(Gln) + L-glutamate + ADP + phosphate + H(+). The catalysed reaction is L-aspartyl-tRNA(Asn) + L-glutamine + ATP + H2O = L-asparaginyl-tRNA(Asn) + L-glutamate + ADP + phosphate + 2 H(+). Allows the formation of correctly charged Asn-tRNA(Asn) or Gln-tRNA(Gln) through the transamidation of misacylated Asp-tRNA(Asn) or Glu-tRNA(Gln) in organisms which lack either or both of asparaginyl-tRNA or glutaminyl-tRNA synthetases. The reaction takes place in the presence of glutamine and ATP through an activated phospho-Asp-tRNA(Asn) or phospho-Glu-tRNA(Gln). This chain is Aspartyl/glutamyl-tRNA(Asn/Gln) amidotransferase subunit C, found in Solidesulfovibrio magneticus (strain ATCC 700980 / DSM 13731 / RS-1) (Desulfovibrio magneticus).